A 764-amino-acid polypeptide reads, in one-letter code: 5-methyltetrahydropteroyltriglutamate--homocysteine methyltransferase (764 aa).

5-methyltetrahydropteroyltri-L-glutamate-binding positions include 16–19 and Lys121; that span reads RELK. Residues 440–442 and Glu493 contribute to the L-homocysteine site; that span reads IGS. L-methionine is bound by residues 440 to 442 and Glu493; that span reads IGS. Residues 524–525 and Trp570 contribute to the 5-methyltetrahydropteroyltri-L-glutamate site; that span reads RC. Asp608 provides a ligand contact to L-homocysteine. Asp608 is an L-methionine binding site. Glu614 serves as a coordination point for 5-methyltetrahydropteroyltri-L-glutamate. Residues His650, Cys652, and Glu674 each coordinate Zn(2+). The active-site Proton donor is the His703. Residue Cys735 participates in Zn(2+) binding.

The protein belongs to the vitamin-B12 independent methionine synthase family. Zn(2+) serves as cofactor.

The catalysed reaction is 5-methyltetrahydropteroyltri-L-glutamate + L-homocysteine = tetrahydropteroyltri-L-glutamate + L-methionine. Its pathway is amino-acid biosynthesis; L-methionine biosynthesis via de novo pathway; L-methionine from L-homocysteine (MetE route): step 1/1. In terms of biological role, catalyzes the transfer of a methyl group from 5-methyltetrahydrofolate to homocysteine resulting in methionine formation. This is 5-methyltetrahydropteroyltriglutamate--homocysteine methyltransferase from Burkholderia ambifaria (strain MC40-6).